The sequence spans 529 residues: Peptide chain release factor 3 (529 aa).

The region spanning 10–278 is the tr-type G domain; the sequence is ARRRTFAIIS…NFVDLAPAPR (269 aa). Residues 19-26, 87-91, and 141-144 contribute to the GTP site; these read SHPDAGKT, DTPGH, and NKLD.

This sequence belongs to the TRAFAC class translation factor GTPase superfamily. Classic translation factor GTPase family. PrfC subfamily.

Its subcellular location is the cytoplasm. Increases the formation of ribosomal termination complexes and stimulates activities of RF-1 and RF-2. It binds guanine nucleotides and has strong preference for UGA stop codons. It may interact directly with the ribosome. The stimulation of RF-1 and RF-2 is significantly reduced by GTP and GDP, but not by GMP. In Nitratidesulfovibrio vulgaris (strain ATCC 29579 / DSM 644 / CCUG 34227 / NCIMB 8303 / VKM B-1760 / Hildenborough) (Desulfovibrio vulgaris), this protein is Peptide chain release factor 3.